The following is a 429-amino-acid chain: Ribosomal RNA small subunit methyltransferase B (429 aa).

Residues 254 to 260, D277, D303, and D322 contribute to the S-adenosyl-L-methionine site; that span reads CAAPGGK. The Nucleophile role is filled by C375.

It belongs to the class I-like SAM-binding methyltransferase superfamily. RsmB/NOP family.

Its subcellular location is the cytoplasm. The enzyme catalyses cytidine(967) in 16S rRNA + S-adenosyl-L-methionine = 5-methylcytidine(967) in 16S rRNA + S-adenosyl-L-homocysteine + H(+). Functionally, specifically methylates the cytosine at position 967 (m5C967) of 16S rRNA. This Shigella flexneri protein is Ribosomal RNA small subunit methyltransferase B.